The sequence spans 182 residues: Hypoxanthine/guanine phosphoribosyltransferase (182 aa).

This sequence belongs to the purine/pyrimidine phosphoribosyltransferase family. Archaeal HPRT subfamily. As to quaternary structure, homodimer.

It localises to the cytoplasm. It catalyses the reaction IMP + diphosphate = hypoxanthine + 5-phospho-alpha-D-ribose 1-diphosphate. It carries out the reaction GMP + diphosphate = guanine + 5-phospho-alpha-D-ribose 1-diphosphate. It functions in the pathway purine metabolism; IMP biosynthesis via salvage pathway; IMP from hypoxanthine: step 1/1. Functionally, catalyzes a salvage reaction resulting in the formation of IMP that is energically less costly than de novo synthesis. This chain is Hypoxanthine/guanine phosphoribosyltransferase, found in Methanosphaerula palustris (strain ATCC BAA-1556 / DSM 19958 / E1-9c).